The sequence spans 140 residues: Vacuolar protein sorting-associated protein 55 homolog (140 aa).

Over 1–16 (MADVPGYLRTCLDMGK) the chain is Cytoplasmic. A helical transmembrane segment spans residues 17-37 (IAFLAILVSTGIVLQILACAL). The Lumenal segment spans residues 38–40 (FNN). A helical transmembrane segment spans residues 41-61 (WWPMLSVIMYVLLPMPLLFFG). Residues 62 to 75 (GSDSTSLFNESDNS) are Cytoplasmic-facing. The helical transmembrane segment at 76-98 (WINAAKFLTGASAVGSVAIPSIL) threads the bilayer. Residues 99–108 (KHAGLIGWGA) are Lumenal-facing. A helical transmembrane segment spans residues 109–129 (LALDLSSYVVFLVAILGYICI). The Cytoplasmic segment spans residues 130–140 (GDASDNYYSYI).

Belongs to the OB-RGRP/VPS55 family.

It localises to the endosome membrane. In terms of biological role, involved in endosomal protein transport. This is Vacuolar protein sorting-associated protein 55 homolog from Arabidopsis thaliana (Mouse-ear cress).